The chain runs to 127 residues: Riboflavin kinase (127 aa).

A CDP-binding site is contributed by 10–15 (GLGEGK). Positions 39 and 41 each coordinate Mg(2+). FMN contacts are provided by T96 and E104. 109 to 112 (IQLR) serves as a coordination point for CDP.

This sequence belongs to the archaeal riboflavin kinase family. It depends on Mg(2+) as a cofactor.

The catalysed reaction is riboflavin + CTP = CDP + FMN + H(+). It functions in the pathway cofactor biosynthesis; FMN biosynthesis; FMN from riboflavin (CTP route): step 1/1. Catalyzes the CTP-dependent phosphorylation of riboflavin (vitamin B2) to form flavin mononucleotide (FMN). This chain is Riboflavin kinase, found in Methanococcus maripaludis (strain DSM 14266 / JCM 13030 / NBRC 101832 / S2 / LL).